We begin with the raw amino-acid sequence, 184 residues long: Protein C8 (184 aa).

A signal peptide spans 1 to 21; the sequence is MSSIRFIACLYLISIFGNCHE.

The protein belongs to the poxviridae C8 protein family.

This Vaccinia virus (strain Copenhagen) (VACV) protein is Protein C8.